The sequence spans 146 residues: Large ribosomal subunit protein uL24 (146 aa).

Positions 1-33 (MKYNPRVTSSRRRNRKPHFTASSSERRVXMSSP) are disordered. Residues 9 to 18 (SSRRRNRKPH) show a composition bias toward basic residues.

It belongs to the universal ribosomal protein uL24 family.

This chain is Large ribosomal subunit protein uL24 (RPL26), found in Brassica campestris (Field mustard).